A 318-amino-acid polypeptide reads, in one-letter code: Acetyl-coenzyme A carboxylase carboxyl transferase subunit alpha (318 aa).

The CoA carboxyltransferase C-terminal domain maps to 39–297 (RLEKRSQTAL…SEALKAMVGK (259 aa)).

It belongs to the AccA family. Acetyl-CoA carboxylase is a heterohexamer composed of biotin carboxyl carrier protein (AccB), biotin carboxylase (AccC) and two subunits each of ACCase subunit alpha (AccA) and ACCase subunit beta (AccD).

Its subcellular location is the cytoplasm. It carries out the reaction N(6)-carboxybiotinyl-L-lysyl-[protein] + acetyl-CoA = N(6)-biotinyl-L-lysyl-[protein] + malonyl-CoA. Its pathway is lipid metabolism; malonyl-CoA biosynthesis; malonyl-CoA from acetyl-CoA: step 1/1. Component of the acetyl coenzyme A carboxylase (ACC) complex. First, biotin carboxylase catalyzes the carboxylation of biotin on its carrier protein (BCCP) and then the CO(2) group is transferred by the carboxyltransferase to acetyl-CoA to form malonyl-CoA. This is Acetyl-coenzyme A carboxylase carboxyl transferase subunit alpha from Bartonella tribocorum (strain CIP 105476 / IBS 506).